The sequence spans 261 residues: ATP synthase subunit a (261 aa).

6 consecutive transmembrane segments (helical) span residues I45–L65, V107–F127, M133–M153, M162–I182, I209–I229, and L232–L252.

This sequence belongs to the ATPase A chain family. As to quaternary structure, F-type ATPases have 2 components, CF(1) - the catalytic core - and CF(0) - the membrane proton channel. CF(1) has five subunits: alpha(3), beta(3), gamma(1), delta(1), epsilon(1). CF(0) has four main subunits: a, b, b' and c.

The protein localises to the cell inner membrane. Functionally, key component of the proton channel; it plays a direct role in the translocation of protons across the membrane. The chain is ATP synthase subunit a from Cereibacter sphaeroides (strain ATCC 17025 / ATH 2.4.3) (Rhodobacter sphaeroides).